Consider the following 409-residue polypeptide: BRCA1-A complex subunit Abraxas 1 (409 aa).

The MPN domain maps to 7–160 (SAVLSGFVLG…HSLYKPQKGL (154 aa)). Position 48 is a phosphoserine (serine 48). Residues 206-260 (DGSLKEVHKINEMYASLQEELKSICKKVEDSEQAVDKLVKDVNRLKREIEKRRGA) are a coiled coil. The segment covering 362–372 (LLDTQDKRSKA) has biased composition (basic and acidic residues). The interval 362 to 409 (LLDTQDKRSKADTGSSNQDKASKMSSPETDEEIEKMKGFGEYSRSPTF) is disordered. The segment covering 373 to 388 (DTGSSNQDKASKMSSP) has biased composition (polar residues). Serine 386 and serine 387 each carry phosphoserine. A Phosphothreonine modification is found at threonine 390. Residues serine 404 and serine 406 each carry the phosphoserine modification. The short motif at 406-409 (SPTF) is the pSXXF motif element.

This sequence belongs to the FAM175 family. Abraxas subfamily. As to quaternary structure, component of the ARISC complex, at least composed of UIMC1/RAP80, ABRAXAS1, BRCC3/BRCC36, BABAM2 and BABAM1/NBA1. Component of the BRCA1-A complex, at least composed of BRCA1, BARD1, UIMC1/RAP80, ABRAXAS1, BRCC3/BRCC36, BABAM2 and BABAM1/NBA1. In the complex, interacts directly with UIMC1/RAP80, BRCC3/BRCC36 and BABAM2. Interacts directly (when phosphorylated at Ser-406) with BRCA1. Homodimer. The homodimer interacts directly (when phosphorylated at Ser-404 and Ser-406) with two BRCA1 chains, giving rise to a heterotetramer. Binds polyubiquitin. Post-translationally, phosphorylation of Ser-406 of the pSXXF motif by ATM or ATR constitutes a specific recognition motif for the BRCT domain of BRCA1. Ionizing radiation promotes rapid phosphorylation at Ser-404 and Ser-406 by ATM; this promotes recruitment of BRCA1 to sites of DNA damage.

It is found in the nucleus. Functionally, involved in DNA damage response and double-strand break (DSB) repair. Component of the BRCA1-A complex, acting as a central scaffold protein that assembles the various components of the complex and mediates the recruitment of BRCA1. The BRCA1-A complex specifically recognizes 'Lys-63'-linked ubiquitinated histones H2A and H2AX at DNA lesion sites, leading to target the BRCA1-BARD1 heterodimer to sites of DNA damage at DSBs. This complex also possesses deubiquitinase activity that specifically removes 'Lys-63'-linked ubiquitin on histones H2A and H2AX. This Homo sapiens (Human) protein is BRCA1-A complex subunit Abraxas 1.